Reading from the N-terminus, the 439-residue chain is MENQKNFLTTAPYKGTRDFYPEDMRLRNWMFSVMRETVLSFGYEEYDGPILESFDLYKAKSGEEIVERQLYDFIDKGERRVAIRPEMTPTLARMVAGNLRNLPKPVRWFSIPNLWRYEQPGKGRLREHWQLNVDLFGVDSHRAELEILLIADSILKKFGAPIGSYQIKVSHRKLLDSFLKNSLKLNGDQVHGVSKLLDKKSKISPEAFETEMKPFLNNFKEQFSLIETYLNSNLETVSKIPGIDTNSVSFIQNLFQELGELGIDKQLLFDPSIIRGFDYYTGCIFEVFDTNPENRRSLYGGGRYDNLIGLFSKEQLSGIGFGLGDVTLKNFLEGHNLIPNLSREKTIFLPIMDESLFVDTFKLSKELRENEILTETMLDSAKIGKQIQIAEKKGYRYVLFLGESEIRTETVQIKDLISGEQKSLPRKGLSDTLKKDFQL.

This sequence belongs to the class-II aminoacyl-tRNA synthetase family. In terms of assembly, homodimer.

It is found in the cytoplasm. It carries out the reaction tRNA(His) + L-histidine + ATP = L-histidyl-tRNA(His) + AMP + diphosphate + H(+). The polypeptide is Histidine--tRNA ligase (hisS) (Leptospira interrogans serogroup Icterohaemorrhagiae serovar Lai (strain 56601)).